A 470-amino-acid polypeptide reads, in one-letter code: Cell division protein FtsP (470 aa).

Positions 1–27 form a signal peptide, tat-type signal; it reads MSLSRRQFIQASGIALCAGAVPLKASA. Positions 229 to 287 constitute a Plastocyanin-like domain; sequence VRLRLLNASNSRRYQLQMSDGRPLHVISGDQGFLPAPVSVKQLSLAPGERREILVDMSN.

This sequence belongs to the FtsP family. In terms of processing, predicted to be exported by the Tat system. The position of the signal peptide cleavage has not been experimentally proven.

It is found in the periplasm. Functionally, cell division protein that is required for growth during stress conditions. May be involved in protecting or stabilizing the divisomal assembly under conditions of stress. This chain is Cell division protein FtsP, found in Shigella dysenteriae serotype 1 (strain Sd197).